The chain runs to 631 residues: NADPH oxidoreductase A (631 aa).

One can recognise a Flavodoxin-like domain in the interval 73–212 (ILILYGTEYG…CFDRYIDTVC (140 aa)). Residues 79–83 (TEYGL) and 160–191 (VLAL…KRFR) each bind FMN. The FAD-binding FR-type domain occupies 247–480 (KKPYSSKLLV…INNNPDFRLP (234 aa)). Position 249–299 (249–299 (PYSSKLLVKRVLTKGDKVGIHLEFELGDSELKYVPGDALAILPDNAASEVS)) interacts with FAD. Residue 504–630 (QERKALGHTG…KEKRYQKDVW (127 aa)) participates in NADP(+) binding.

FAD is required as a cofactor. The cofactor is FMN.

Functionally, probable NADPH oxidoreductase that controls development beyond the mound stage. This Dictyostelium discoideum (Social amoeba) protein is NADPH oxidoreductase A (redA).